We begin with the raw amino-acid sequence, 256 residues long: uncharacterized protein (256 aa).

3 consecutive transmembrane segments (helical) span residues 42-62 (LIAL…IWFF), 73-93 (FFTL…LIFL), and 108-128 (WLFL…WLIV).

It is found in the cell membrane. This is an uncharacterized protein from Mycoplasma genitalium (strain ATCC 33530 / DSM 19775 / NCTC 10195 / G37) (Mycoplasmoides genitalium).